A 326-amino-acid chain; its full sequence is Biotin synthase (326 aa).

The Radical SAM core domain occupies 41-271 (YHVQLASLLS…EARVRLSAGR (231 aa)). [4Fe-4S] cluster is bound by residues C56, C60, and C63. [2Fe-2S] cluster contacts are provided by C102, C134, C194, and R266.

The protein belongs to the radical SAM superfamily. Biotin synthase family. As to quaternary structure, homodimer. [4Fe-4S] cluster is required as a cofactor. It depends on [2Fe-2S] cluster as a cofactor.

The enzyme catalyses (4R,5S)-dethiobiotin + (sulfur carrier)-SH + 2 reduced [2Fe-2S]-[ferredoxin] + 2 S-adenosyl-L-methionine = (sulfur carrier)-H + biotin + 2 5'-deoxyadenosine + 2 L-methionine + 2 oxidized [2Fe-2S]-[ferredoxin]. Its pathway is cofactor biosynthesis; biotin biosynthesis; biotin from 7,8-diaminononanoate: step 2/2. In terms of biological role, catalyzes the conversion of dethiobiotin (DTB) to biotin by the insertion of a sulfur atom into dethiobiotin via a radical-based mechanism. This is Biotin synthase from Synechococcus sp. (strain RCC307).